The primary structure comprises 330 residues: ADP-L-glycero-D-manno-heptose-6-epimerase (330 aa).

Residues 11–12 (FI), 32–33 (DN), Lys-39, Lys-54, 75–79 (EGACS), and Asn-92 each bind NADP(+). Tyr-139 acts as the Proton acceptor in catalysis. Residue Lys-143 participates in NADP(+) binding. Asn-168 provides a ligand contact to substrate. NADP(+) contacts are provided by Val-169 and Lys-177. Catalysis depends on Lys-177, which acts as the Proton acceptor. Substrate-binding positions include Arg-179, His-186, 200–203 (FGEY), Arg-213, and Tyr-292.

This sequence belongs to the NAD(P)-dependent epimerase/dehydratase family. HldD subfamily. Homopentamer. NADP(+) serves as cofactor.

It catalyses the reaction ADP-D-glycero-beta-D-manno-heptose = ADP-L-glycero-beta-D-manno-heptose. It participates in nucleotide-sugar biosynthesis; ADP-L-glycero-beta-D-manno-heptose biosynthesis; ADP-L-glycero-beta-D-manno-heptose from D-glycero-beta-D-manno-heptose 7-phosphate: step 4/4. In terms of biological role, catalyzes the interconversion between ADP-D-glycero-beta-D-manno-heptose and ADP-L-glycero-beta-D-manno-heptose via an epimerization at carbon 6 of the heptose. This chain is ADP-L-glycero-D-manno-heptose-6-epimerase, found in Burkholderia ambifaria (strain MC40-6).